Here is a 447-residue protein sequence, read N- to C-terminus: Large ribosomal subunit protein bL27m (447 aa).

Basic and acidic residues-rich tracts occupy residues 377–402 and 409–447; these read QREAKKAREGGAAAEKSEKKEVKAEK and KVEKPKAPEAAKKESKPKVEEKKAAAAEPKKDSKTEKKD. The segment at 377–447 is disordered; sequence QREAKKAREG…KKDSKTEKKD (71 aa).

This sequence belongs to the bacterial ribosomal protein bL27 family. Component of the mitochondrial large ribosomal subunit (mt-LSU). Mature N.crassa 74S mitochondrial ribosomes consist of a small (37S) and a large (54S) subunit. The 37S small subunit contains a 16S ribosomal RNA (16S mt-rRNA) and 32 different proteins. The 54S large subunit contains a 23S rRNA (23S mt-rRNA) and 42 different proteins.

The protein localises to the mitochondrion. Component of the mitochondrial ribosome (mitoribosome), a dedicated translation machinery responsible for the synthesis of mitochondrial genome-encoded proteins, including at least some of the essential transmembrane subunits of the mitochondrial respiratory chain. The mitoribosomes are attached to the mitochondrial inner membrane and translation products are cotranslationally integrated into the membrane. In Neurospora crassa (strain ATCC 24698 / 74-OR23-1A / CBS 708.71 / DSM 1257 / FGSC 987), this protein is Large ribosomal subunit protein bL27m (mrp7).